Consider the following 403-residue polypeptide: Phosphoglycerate kinase (403 aa).

Substrate-binding positions include Asp-21–Asn-23, Arg-36, His-59–Arg-62, Arg-119, and Arg-154. Residues Lys-207, Gly-299, Glu-330, and Gly-357 to Ala-360 contribute to the ATP site.

This sequence belongs to the phosphoglycerate kinase family. Monomer.

The protein resides in the cytoplasm. The catalysed reaction is (2R)-3-phosphoglycerate + ATP = (2R)-3-phospho-glyceroyl phosphate + ADP. Its pathway is carbohydrate degradation; glycolysis; pyruvate from D-glyceraldehyde 3-phosphate: step 2/5. The chain is Phosphoglycerate kinase from Chlamydia trachomatis serovar A (strain ATCC VR-571B / DSM 19440 / HAR-13).